The following is a 441-amino-acid chain: Transcriptional regulatory protein ZraR (441 aa).

Residues 7 to 121 (DILVVDDDVS…RLQETLEKAL (115 aa)) enclose the Response regulatory domain. Aspartate 56 is modified (4-aspartylphosphate). In terms of domain architecture, Sigma-54 factor interaction spans 141-370 (MIGSSPAMQH…LENAIERAVV (230 aa)). ATP-binding residues include glycine 172, threonine 173, arginine 329, and arginine 359. The H-T-H motif DNA-binding region spans 421–440 (KTEAARQLGITRKTLLAKLS).

Forms homohexamers in the crystal structure. However, the dimerization interface between DNA-binding domains observed in the crystal structure suggests that dodecamers, rather than hexamers, might be the functionally important oligomer. Phosphorylated by ZraS.

It localises to the cytoplasm. With respect to regulation, activity of the ZraS/ZraR two-component system is repressed by the zinc-bound form of ZraP, which probably interacts with the periplasmic region of ZraS. Its function is as follows. Part of the Zra signaling pathway, an envelope stress response (ESR) system composed of the periplasmic accessory protein ZraP, the histidine kinase ZraS and the transcriptional regulator ZraR. The ZraPSR system contributes to antibiotic resistance and is important for membrane integrity in the presence of membrane-targeting biocides. ZraR is a member of the two-component regulatory system ZraS/ZraR. When activated by ZraS, acts in conjunction with sigma-54 to regulate the expression of zraP in the presence of high Zn(2+) or Pb(2+) concentrations. Also positively autoregulates the expression of the zraSR operon. This is Transcriptional regulatory protein ZraR from Salmonella typhimurium (strain LT2 / SGSC1412 / ATCC 700720).